The chain runs to 64 residues: uncharacterized protein (64 aa).

It to P.abyssi PAB3148.

This is an uncharacterized protein from Archaeoglobus fulgidus (strain ATCC 49558 / DSM 4304 / JCM 9628 / NBRC 100126 / VC-16).